A 485-amino-acid chain; its full sequence is Glycogen synthase (485 aa).

Lysine 15 serves as a coordination point for ADP-alpha-D-glucose.

This sequence belongs to the glycosyltransferase 1 family. Bacterial/plant glycogen synthase subfamily.

It catalyses the reaction [(1-&gt;4)-alpha-D-glucosyl](n) + ADP-alpha-D-glucose = [(1-&gt;4)-alpha-D-glucosyl](n+1) + ADP + H(+). The protein operates within glycan biosynthesis; glycogen biosynthesis. Synthesizes alpha-1,4-glucan chains using ADP-glucose. This is Glycogen synthase from Rhodospirillum rubrum (strain ATCC 11170 / ATH 1.1.1 / DSM 467 / LMG 4362 / NCIMB 8255 / S1).